Reading from the N-terminus, the 29-residue chain is MMYLMPLLIVIVGCLALHCSDDDMPDGHA.

The polypeptide is Protein 1.5 (Escherichia phage T7 (Bacteriophage T7)).